A 429-amino-acid polypeptide reads, in one-letter code: Nucleotide exchange factor Sil1 (429 aa).

An N-terminal signal peptide occupies residues 1–24 (MSGKQVVILLGSVLILGCLQVAAA). N-linked (GlcNAc...) asparagine glycosylation is present at asparagine 29. Residues 70–98 (DESERGTSLQSQPDDQNARESHDDNEPLA) form a disordered region. The span at 75–84 (GTSLQSQPDD) shows a compositional bias: polar residues. The segment covering 85-94 (QNARESHDDN) has biased composition (basic and acidic residues). A coiled-coil region spans residues 104 to 135 (DIIEESIRRVKEQKKSYAELRKAYKEFQKNFR). Asparagine 150, asparagine 199, and asparagine 400 each carry an N-linked (GlcNAc...) asparagine glycan. The Prevents secretion from ER motif lies at 426–429 (HTEL).

This sequence belongs to the SIL1 family.

The protein localises to the endoplasmic reticulum lumen. In terms of biological role, required for protein translocation and folding in the endoplasmic reticulum (ER). Functions as a nucleotide exchange factor for an ER lumenal chaperone of HSP70 family. The chain is Nucleotide exchange factor Sil1 from Drosophila melanogaster (Fruit fly).